The sequence spans 332 residues: Fructose-1,6-bisphosphatase class 1 (332 aa).

Mg(2+) contacts are provided by E93, D113, L115, and D116. Substrate is bound by residues 116–119, N209, Y235, and K272; that span reads DGSS. E278 is a Mg(2+) binding site.

Belongs to the FBPase class 1 family. Homotetramer. Mg(2+) is required as a cofactor.

Its subcellular location is the cytoplasm. The enzyme catalyses beta-D-fructose 1,6-bisphosphate + H2O = beta-D-fructose 6-phosphate + phosphate. It participates in carbohydrate biosynthesis; gluconeogenesis. The sequence is that of Fructose-1,6-bisphosphatase class 1 from Syntrophus aciditrophicus (strain SB).